A 187-amino-acid polypeptide reads, in one-letter code: Ribosome-recycling factor (187 aa).

Belongs to the RRF family.

Its subcellular location is the cytoplasm. Responsible for the release of ribosomes from messenger RNA at the termination of protein biosynthesis. May increase the efficiency of translation by recycling ribosomes from one round of translation to another. The protein is Ribosome-recycling factor of Paracoccus denitrificans (strain Pd 1222).